A 512-amino-acid polypeptide reads, in one-letter code: Serine/threonine-protein kinase grp (512 aa).

Residues 22–279 (WTLAQTLGEG…LEKTLDHKWC (258 aa)) form the Protein kinase domain. Residues 28 to 36 (LGEGAYGEV) and Lys-51 contribute to the ATP site. Asp-143 (proton acceptor) is an active-site residue. A disordered region spans residues 335-360 (PTMRSDDDFNVRLGSGRSKEDGGDRQ).

This sequence belongs to the protein kinase superfamily. CAMK Ser/Thr protein kinase family. NIM1 subfamily. Phosphorylated in a MEI-41/ATR dependent manner in response to DNA damage or the presence of unreplicated DNA.

It is found in the nucleus. It carries out the reaction L-seryl-[protein] + ATP = O-phospho-L-seryl-[protein] + ADP + H(+). It catalyses the reaction L-threonyl-[protein] + ATP = O-phospho-L-threonyl-[protein] + ADP + H(+). Serine/threonine-protein kinase which is required for checkpoint-mediated cell cycle arrest and activation of DNA repair in response to the presence of DNA damage or unreplicated DNA. May also negatively regulate cell cycle progression during unperturbed cell cycles. May phosphorylate the CDC25 phosphatase stg, which promotes its degradation. This results in increased inhibitory tyrosine phosphorylation of Cdk1-cyclin complexes and consequent inhibition of cell cycle progression. The polypeptide is Serine/threonine-protein kinase grp (Drosophila melanogaster (Fruit fly)).